The sequence spans 109 residues: Sperm-specific class P protein 9/11 (109 aa).

Positions 2 to 109 (SLTADPPACT…TVTIPMSATA (108 aa)) constitute an MSP domain.

Expressed at higher level in testis.

The chain is Sperm-specific class P protein 9/11 (ssp-9) from Caenorhabditis elegans.